Consider the following 660-residue polypeptide: Interferon-induced GTP-binding protein Mx1 (660 aa).

The residue at position 1 (Met-1) is an N-acetylmethionine. Residues 1 to 10 (MVHSEAKMTR) are compositionally biased toward basic and acidic residues. The tract at residues 1 to 29 (MVHSEAKMTRPDSASASKQQLLNGNADIQ) is disordered. The span at 12–29 (DSASASKQQLLNGNADIQ) shows a compositional bias: polar residues. The Dynamin-type G domain occupies 67-340 (DLALPAIAVI…LITHISKSLP (274 aa)). The interval 77–84 (GDQSSGKS) is G1 motif. 77–84 (GDQSSGKS) contributes to the GTP binding site. The G2 motif stretch occupies residues 102 to 104 (VTR). The tract at residues 178-181 (DLPG) is G3 motif. Residues 178–182 (DLPGI) and 247–250 (TKPD) contribute to the GTP site. The tract at residues 247–250 (TKPD) is G4 motif. The segment at 279–282 (KCRG) is G5 motif. The bundle signaling element (BSE) stretch occupies residues 341–366 (LLENQIKESYQNLSDELQKYGTDIPE). Residues 366–533 (EDETEKTFFL…HFQMEKIVYC (168 aa)) form a middle domain region. The interval 367–630 (DETEKTFFLI…RDTYDWLLKE (264 aa)) is stalk. Residues 554–557 (KKKK) are critical for lipid-binding. Residues 572 to 660 (MAEILEHLNA…ARRRLAKFPG (89 aa)) form the GED domain.

Belongs to the TRAFAC class dynamin-like GTPase superfamily. Dynamin/Fzo/YdjA family. In terms of assembly, homooligomer. Oligomerizes into multimeric filamentous or ring-like structures by virtue of its stalk domain. Oligomerization is critical for GTPase activity, protein stability, and recognition of viral target structures. Interacts with TRPC1, TRPC3, TRPC4, TRPC5, TRPC6 and TRPC7. Interacts with HSPA5. Interacts with TUBB/TUBB5. Interacts with DDX39A and DDX39B. Post-translationally, ISGylated.

The protein localises to the cytoplasm. Its subcellular location is the endoplasmic reticulum membrane. It localises to the perinuclear region. Interferon-induced dynamin-like GTPase with antiviral activity. In Equus caballus (Horse), this protein is Interferon-induced GTP-binding protein Mx1 (MX1).